Consider the following 190-residue polypeptide: dCTP deaminase, dUMP-forming (190 aa).

Residues 101 to 106 (KSSLGR), aspartate 119, 127 to 129 (TLE), glutamine 148, tyrosine 162, and glutamine 174 each bind dCTP. Glutamate 129 serves as the catalytic Proton donor/acceptor. The segment at 161–190 (PYGSSSVGSKYQGQRGPTPSRSYQNFVKND) is disordered. Positions 163-190 (GSSSVGSKYQGQRGPTPSRSYQNFVKND) are enriched in polar residues.

This sequence belongs to the dCTP deaminase family. Homotrimer.

The enzyme catalyses dCTP + 2 H2O = dUMP + NH4(+) + diphosphate. It participates in pyrimidine metabolism; dUMP biosynthesis; dUMP from dCTP: step 1/1. Its function is as follows. Bifunctional enzyme that catalyzes both the deamination of dCTP to dUTP and the hydrolysis of dUTP to dUMP without releasing the toxic dUTP intermediate. The sequence is that of dCTP deaminase, dUMP-forming from Mycolicibacterium vanbaalenii (strain DSM 7251 / JCM 13017 / BCRC 16820 / KCTC 9966 / NRRL B-24157 / PYR-1) (Mycobacterium vanbaalenii).